The primary structure comprises 505 residues: Maturase K (505 aa).

The protein belongs to the intron maturase 2 family. MatK subfamily.

The protein localises to the plastid. It localises to the chloroplast. Usually encoded in the trnK tRNA gene intron. Probably assists in splicing its own and other chloroplast group II introns. This chain is Maturase K, found in Coffea arabica (Arabian coffee).